A 468-amino-acid chain; its full sequence is Bifunctional protein HldE (468 aa).

Residues 1 to 315 form a ribokinase region; the sequence is MAKKVEILVV…ELLRSRANAE (315 aa). 192 to 195 is an ATP binding site; it reads NRKE. Residue aspartate 260 is part of the active site. The interval 340–468 is cytidylyltransferase; that stretch reads FTNGCFDILH…IVKRIKDADK (129 aa).

It in the N-terminal section; belongs to the carbohydrate kinase PfkB family. In the C-terminal section; belongs to the cytidylyltransferase family. As to quaternary structure, homodimer.

It catalyses the reaction D-glycero-beta-D-manno-heptose 7-phosphate + ATP = D-glycero-beta-D-manno-heptose 1,7-bisphosphate + ADP + H(+). The catalysed reaction is D-glycero-beta-D-manno-heptose 1-phosphate + ATP + H(+) = ADP-D-glycero-beta-D-manno-heptose + diphosphate. Its pathway is nucleotide-sugar biosynthesis; ADP-L-glycero-beta-D-manno-heptose biosynthesis; ADP-L-glycero-beta-D-manno-heptose from D-glycero-beta-D-manno-heptose 7-phosphate: step 1/4. It participates in nucleotide-sugar biosynthesis; ADP-L-glycero-beta-D-manno-heptose biosynthesis; ADP-L-glycero-beta-D-manno-heptose from D-glycero-beta-D-manno-heptose 7-phosphate: step 3/4. Catalyzes the phosphorylation of D-glycero-D-manno-heptose 7-phosphate at the C-1 position to selectively form D-glycero-beta-D-manno-heptose-1,7-bisphosphate. Its function is as follows. Catalyzes the ADP transfer from ATP to D-glycero-beta-D-manno-heptose 1-phosphate, yielding ADP-D-glycero-beta-D-manno-heptose. This chain is Bifunctional protein HldE, found in Campylobacter curvus (strain 525.92).